A 570-amino-acid polypeptide reads, in one-letter code: Sulfite reductase [NADPH] hemoprotein beta-component (570 aa).

Residues Cys-434, Cys-440, Cys-479, and Cys-483 each coordinate [4Fe-4S] cluster. Cys-483 is a binding site for siroheme.

This sequence belongs to the nitrite and sulfite reductase 4Fe-4S domain family. Alpha(8)-beta(8). The alpha component is a flavoprotein, the beta component is a hemoprotein. It depends on siroheme as a cofactor. [4Fe-4S] cluster serves as cofactor.

The catalysed reaction is hydrogen sulfide + 3 NADP(+) + 3 H2O = sulfite + 3 NADPH + 4 H(+). The protein operates within sulfur metabolism; hydrogen sulfide biosynthesis; hydrogen sulfide from sulfite (NADPH route): step 1/1. Component of the sulfite reductase complex that catalyzes the 6-electron reduction of sulfite to sulfide. This is one of several activities required for the biosynthesis of L-cysteine from sulfate. The protein is Sulfite reductase [NADPH] hemoprotein beta-component of Salmonella enteritidis PT4 (strain P125109).